A 290-amino-acid polypeptide reads, in one-letter code: Plasma membrane ascorbate-dependent reductase CYBRD1 (290 aa).

Residues 1-7 (MAMEGYR) lie on the Cytoplasmic side of the membrane. Residues 8-32 (GFLGLLVSALLVGFLSVIFVLIWVL) traverse the membrane as a helical segment. The Cytochrome b561 domain maps to 15 to 220 (SALLVGFLSV…FGALIFWIVT (206 aa)). Over 33-47 (HFREGLGWNGSGLEF) the chain is Extracellular. The chain crosses the membrane as a helical span at residues 48–69 (NWHPVLAVTGFVFIQGIAIIVY). Residues His-50, Arg-70, and Lys-79 each contribute to the heme b site. At 70–78 (RLPWTWKCS) the chain is on the cytoplasmic side. Positions 79 and 83 each coordinate L-ascorbate. A helical membrane pass occupies residues 79–105 (KLLMKSIHAGLNAVAAILAIISVVAVF). His-86 contributes to the heme b binding site. Over 106–118 (EYHNVQKVPHMYS) the chain is Extracellular. A Fe(3+)-binding site is contributed by His-108. Heme b is bound by residues 115–118 (HMYS) and His-120. The chain crosses the membrane as a helical span at residues 119-144 (LHSWVGLTALILYIQQLVVGFFVFLL). Residues 145-151 (PWAPPSL) lie on the Cytoplasmic side of the membrane. Residue Arg-152 coordinates L-ascorbate. Residues 152 to 179 (RAIVMPIHVYSGLLLFGTVIATVLMGVT) form a helical membrane-spanning segment. Residues His-159 and Glu-180 each coordinate heme b. The Extracellular segment spans residues 180 to 197 (EKLFFVLKHPSYHSFPPE). A helical membrane pass occupies residues 198-222 (GVFTNTLGLLILVFGALIFWIVTRP). Residues 223–290 (QWKRPREPGS…LADSGQRSTM (68 aa)) are Cytoplasmic-facing. Lys-225 serves as a coordination point for heme b. Position 232 is a phosphoserine (Ser-232). A disordered region spans residues 257 to 290 (SMDAADPADAESSSEGAARKRTLGLADSGQRSTM). Low complexity predominate over residues 260-272 (AADPADAESSSEG). Phosphothreonine is present on Thr-289.

As to quaternary structure, homodimer. Heme b serves as cofactor. Highly expressed in the brush-border membrane of duodenal enterocytes (at protein level). Also expressed in liver and spleen.

It localises to the cell membrane. Its subcellular location is the apical cell membrane. It catalyses the reaction Fe(3+)(out) + L-ascorbate(in) = monodehydro-L-ascorbate radical(in) + Fe(2+)(out) + H(+). The catalysed reaction is Cu(2+)(out) + L-ascorbate(in) = Cu(+)(out) + monodehydro-L-ascorbate radical(in) + H(+). The enzyme catalyses monodehydro-L-ascorbate radical(out) + L-ascorbate(in) = monodehydro-L-ascorbate radical(in) + L-ascorbate(out). Plasma membrane reductase that uses cytoplasmic ascorbate as an electron donor to reduce extracellular Fe(3+) into Fe(2+). Probably functions in dietary iron absorption at the brush border of duodenal enterocytes by producing Fe(2+), the divalent form of iron that can be transported into enterocytes. It is also able to reduce extracellular monodehydro-L-ascorbate and may be involved in extracellular ascorbate regeneration by erythrocytes in blood. May also act as a ferrireductase in airway epithelial cells. May also function as a cupric transmembrane reductase. In Mus musculus (Mouse), this protein is Plasma membrane ascorbate-dependent reductase CYBRD1.